The chain runs to 99 residues: Aspartyl/glutamyl-tRNA(Asn/Gln) amidotransferase subunit C (99 aa).

This sequence belongs to the GatC family. In terms of assembly, heterotrimer of A, B and C subunits.

It catalyses the reaction L-glutamyl-tRNA(Gln) + L-glutamine + ATP + H2O = L-glutaminyl-tRNA(Gln) + L-glutamate + ADP + phosphate + H(+). The enzyme catalyses L-aspartyl-tRNA(Asn) + L-glutamine + ATP + H2O = L-asparaginyl-tRNA(Asn) + L-glutamate + ADP + phosphate + 2 H(+). Its function is as follows. Allows the formation of correctly charged Asn-tRNA(Asn) or Gln-tRNA(Gln) through the transamidation of misacylated Asp-tRNA(Asn) or Glu-tRNA(Gln) in organisms which lack either or both of asparaginyl-tRNA or glutaminyl-tRNA synthetases. The reaction takes place in the presence of glutamine and ATP through an activated phospho-Asp-tRNA(Asn) or phospho-Glu-tRNA(Gln). This Delftia acidovorans (strain DSM 14801 / SPH-1) protein is Aspartyl/glutamyl-tRNA(Asn/Gln) amidotransferase subunit C.